The chain runs to 378 residues: Ribosomal RNA large subunit methyltransferase G (378 aa).

The protein belongs to the methyltransferase superfamily. RlmG family.

The protein localises to the cytoplasm. It catalyses the reaction guanosine(1835) in 23S rRNA + S-adenosyl-L-methionine = N(2)-methylguanosine(1835) in 23S rRNA + S-adenosyl-L-homocysteine + H(+). Its function is as follows. Specifically methylates the guanine in position 1835 (m2G1835) of 23S rRNA. This chain is Ribosomal RNA large subunit methyltransferase G, found in Escherichia coli O9:H4 (strain HS).